Reading from the N-terminus, the 199-residue chain is N-(5'-phosphoribosyl)anthranilate isomerase (199 aa).

Belongs to the TrpF family.

It carries out the reaction N-(5-phospho-beta-D-ribosyl)anthranilate = 1-(2-carboxyphenylamino)-1-deoxy-D-ribulose 5-phosphate. Its pathway is amino-acid biosynthesis; L-tryptophan biosynthesis; L-tryptophan from chorismate: step 3/5. The polypeptide is N-(5'-phosphoribosyl)anthranilate isomerase (Streptococcus pneumoniae serotype 4 (strain ATCC BAA-334 / TIGR4)).